A 480-amino-acid chain; its full sequence is Protein nucleotidyltransferase YdiU (480 aa).

ATP contacts are provided by Gly86, Gly88, Arg89, Lys109, Asp121, Gly122, Arg172, and Arg179. Asp248 (proton acceptor) is an active-site residue. Mg(2+) contacts are provided by Asn249 and Asp258. Asp258 contributes to the ATP binding site.

The protein belongs to the SELO family. Mg(2+) serves as cofactor. Requires Mn(2+) as cofactor.

The enzyme catalyses L-seryl-[protein] + ATP = 3-O-(5'-adenylyl)-L-seryl-[protein] + diphosphate. It carries out the reaction L-threonyl-[protein] + ATP = 3-O-(5'-adenylyl)-L-threonyl-[protein] + diphosphate. The catalysed reaction is L-tyrosyl-[protein] + ATP = O-(5'-adenylyl)-L-tyrosyl-[protein] + diphosphate. It catalyses the reaction L-histidyl-[protein] + UTP = N(tele)-(5'-uridylyl)-L-histidyl-[protein] + diphosphate. The enzyme catalyses L-seryl-[protein] + UTP = O-(5'-uridylyl)-L-seryl-[protein] + diphosphate. It carries out the reaction L-tyrosyl-[protein] + UTP = O-(5'-uridylyl)-L-tyrosyl-[protein] + diphosphate. In terms of biological role, nucleotidyltransferase involved in the post-translational modification of proteins. It can catalyze the addition of adenosine monophosphate (AMP) or uridine monophosphate (UMP) to a protein, resulting in modifications known as AMPylation and UMPylation. The sequence is that of Protein nucleotidyltransferase YdiU from Salmonella choleraesuis (strain SC-B67).